Here is a 260-residue protein sequence, read N- to C-terminus: Caveolae-associated protein 3 (260 aa).

The segment at 1-84 (MGESALESGP…SNTLAQLLAK (84 aa)) is interaction with CAVIN1. The tract at residues 20–78 (VHAVTVVTLLEKLATMLETLRERQGGLAQRQGGLAGSVRRIQSNLGALSRSHDTTSNTL) is leucine-zipper. 2 positions are modified to phosphoserine: Ser-62 and Ser-70. Lys-128 is covalently cross-linked (Glycyl lysine isopeptide (Lys-Gly) (interchain with G-Cter in SUMO2)). An interaction with CAV1 region spans residues 135–201 (AKAFQKAPEP…SGRKGHAAPT (67 aa)). Residues 140–260 (KAPEPLGPVE…AAVLQVESAA (121 aa)) are disordered. The span at 157–168 (AEAEESSDEEEP) shows a compositional bias: acidic residues. A phosphoserine mark is found at Ser-162, Ser-163, and Ser-171. Residues 201–210 (TPTPVKPPRL) show a composition bias toward pro residues.

The protein belongs to the CAVIN family. Component of the CAVIN complex composed of CAVIN1, CAVIN2, CAVIN3 and CAVIN4. Interacts with PRKCD and with phosphatidylserine. Phosphatidylserine may form a bridge between PKC and PKC-binding partners and stabilize the binding. Interacts with PER2. Interacts with CAVIN1 and EPS15L1. Interacts (via leucine-zipper domain) with CAV1 in a cholesterol-sensitive manner. Post-translationally, in vitro, phosphorylated by PRKCD.

The protein localises to the cytoplasm. Its subcellular location is the membrane. It is found in the caveola. The protein resides in the cytosol. Functionally, regulates the traffic and/or budding of caveolae. Plays a role in caveola formation in a tissue-specific manner. Required for the formation of caveolae in smooth muscle but not in the lung and heart endothelial cells. Regulates the equilibrium between cell surface-associated and cell surface-dissociated caveolae by promoting the rapid release of caveolae from the cell surface. Plays a role in the regulation of the circadian clock. Modulates the period length and phase of circadian gene expression and also regulates expression and interaction of the core clock components PER1/2 and CRY1/2. The protein is Caveolae-associated protein 3 (CAVIN3) of Bos taurus (Bovine).